Here is a 790-residue protein sequence, read N- to C-terminus: MTIIQRSTSLNNIINEKLGKIIVASNTLPITVTKFNETPLFGSPLSASRESITSSFGMSEPSRDRESKIQIQINGHPFPTQSALETLKAKDEIEDWLWIGWSHCEVNEDEEPMLNQAIKEFSPHFEHVFLNPRQFENYYKGYCKNGLWLLLHYQMNFIRMQSEWWEEYVGVNQMFAEKIASVWRPSDIIWIHDYHLMLVPQMLRQLLPPEASIGFFFHAPFPSYELFRILPNRKELLKGILSSNLIGFQSFEYVRHFKSSCARLLDLEVHPKGLEIFEDGSTHFTKLQVYPIGVDYNDFAKNLNLPEVSSRVESLRKIFKGKKVVVARDRLDQIEGVPRKLEVFEQLLNDHPEYIGKLVFIQIYEPTVEEGDETDEQKILHKTVNEMVGRINGKFGKLSFNPIEYINKKISYEELSALYKLADIALITPIRDGMNLTSHEYVVCQKDNFGVLILSEFAGAARCLGGSIIVNPFSKKEIMEAIIEALNMSMHDRKLKHQINYNYVLANTSSFWGKRFLCDLNEATQKEIMETSVPRANFQEIEDSYKKAKVRVFFLDYDGTLTPLVRLPSQAMPSKQLIDVLSKLTEDRRNEVYVISGRDRSSLEKWLGHLPIGMSCEHGVFTRQPGENQPWTESPNAEVQWKDTVLSIMQDFEDRTPGSMTETKQVNITWHYRNADPDFGQFQAKELIAQLRSVANKYPLDILSGKKAIEVKPIGINKGEIVKMILQKIDADFILCIGDDKTDEDMFKALYNVPSFTIRVCGDLEESTKARGVVESSSEVLTLLNRLSLS.

It in the N-terminal section; belongs to the glycosyltransferase 20 family. This sequence in the C-terminal section; belongs to the trehalose phosphatase family.

It carries out the reaction D-glucose 6-phosphate + UDP-alpha-D-glucose = alpha,alpha-trehalose 6-phosphate + UDP + H(+). Functionally, synthesizes trehalose 6-phosphate, the precursor for the production of trehalose, the main carbohydrate storage reserve of the dormant spore. Trehalose accumulates in both prestalk and prespore cells and then is rapidly metabolized during terminal differentiation of stalk cells, while being stored in spores, where it serves as the principal energy and carbon source for germination. This Dictyostelium discoideum (Social amoeba) protein is Alpha,alpha-trehalose-phosphate synthase [UDP-forming] B (tpsB).